The following is a 648-amino-acid chain: Phosphatidylinositol-3,5-bisphosphate 3-phosphatase MTMR14 (648 aa).

The span at 1–19 shows a compositional bias: low complexity; the sequence is MAGARAAAAASAGSTASSG. The disordered stretch occupies residues 1–27; it reads MAGARAAAAASAGSTASSGSPPPQEPG. K193 is modified (N6-acetyllysine). N225 and N240 each carry an N-linked (GlcNAc...) asparagine glycan. The active-site Phosphocysteine intermediate is C329. 5 residues coordinate a 1,2-diacyl-sn-glycero-3-phospho-(1D-myo-inositol-3,5-bisphosphate): G332, W333, D334, R335, and R381. 5 residues coordinate a 1,2-diacyl-sn-glycero-3-phospho-(1D-myo-inositol-3-phosphate): G332, W333, D334, R335, and R381. The tract at residues 471-544 is disordered; it reads PTQAAWRKSH…PRSVDHPLPG (74 aa). Over residues 494 to 506 the composition is skewed to basic and acidic residues; the sequence is PSEERLPSHHGLT. Residue S516 is modified to Phosphoserine. The N-linked (GlcNAc...) asparagine glycan is linked to N517. S528, S578, and S622 each carry phosphoserine. Residue R636 is modified to Omega-N-methylarginine.

It belongs to the protein-tyrosine phosphatase family. Non-receptor class myotubularin subfamily.

The protein localises to the cytoplasm. The enzyme catalyses a 1,2-diacyl-sn-glycero-3-phospho-(1D-myo-inositol-3,5-bisphosphate) + H2O = a 1,2-diacyl-sn-glycero-3-phospho-(1D-myo-inositol-5-phosphate) + phosphate. It catalyses the reaction a 1,2-diacyl-sn-glycero-3-phospho-(1D-myo-inositol-3-phosphate) + H2O = a 1,2-diacyl-sn-glycero-3-phospho-(1D-myo-inositol) + phosphate. Lipid phosphatase that specifically dephosphorylates the D-3 position of phosphatidylinositol 3-phosphate and phosphatidylinositol 3,5-bisphosphate, generating phosphatidylinositol and phosphatidylinositol 5-phosphate. The chain is Phosphatidylinositol-3,5-bisphosphate 3-phosphatase MTMR14 from Mus musculus (Mouse).